The sequence spans 475 residues: UDP-glycosyltransferase 1 (475 aa).

H15 (proton acceptor) is an active-site residue. An anthocyanidin is bound at residue H15. Residue D117 is the Charge relay of the active site. Residues A345, Q347, H362, W365, N366, S367, and E370 each coordinate UDP-alpha-D-glucose. G385 is an an anthocyanidin binding site. UDP-alpha-D-glucose contacts are provided by E386 and Q387.

The protein belongs to the UDP-glycosyltransferase family. In terms of tissue distribution, mostly expressed in leaves and flowers, and, to a lower extent, in roots and stems.

It carries out the reaction (20S)-protopanaxadiol + UDP-alpha-D-glucose = (20S)-ginsenoside C-K + UDP + H(+). The catalysed reaction is (20S)-ginsenoside Rg3 + UDP-alpha-D-glucose = (20S)-ginsenoside Rd + UDP + H(+). It catalyses the reaction (20S)-ginsenoside Rh2 + UDP-alpha-D-glucose = (20S)-ginsenoside F2 + UDP + H(+). The enzyme catalyses (20S)-protopanaxatriol + UDP-alpha-D-glucose = (20S)-ginsenoside F1 + UDP + H(+). It carries out the reaction dammarenediol-II + UDP-alpha-D-glucose = (20S)-20-O-(beta-D-glucosyl)-3-hydroxydammarene + UDP + H(+). The protein operates within secondary metabolite biosynthesis; terpenoid biosynthesis. Functionally, component of the dammarane-type triterpene saponins (e.g. ginsenosides or panaxosides) biosynthetic pathway. Glycosyltransferase that catalyzes the biosynthesis of ginsenoside F1 from protopanaxatriol (PPT). Triggers C20-OH glycosylation of ginsenoside Rg3 to produce ginsenoside Rd. Mediates the conversion of protopanaxadiol (PPD) to the ginsenoside compound K. catalyzes the production of 20S-O-beta-(D-glucosyl)-dammarenediol II form dammarenediol II (DM). The polypeptide is UDP-glycosyltransferase 1 (Panax ginseng (Korean ginseng)).